A 199-amino-acid chain; its full sequence is Peroxiredoxin-1 (199 aa).

Residue Ser2 is modified to N-acetylserine. One can recognise a Thioredoxin domain in the interval 6-165 (AKIGHPAPNF…TLRLVQAFQF (160 aa)). At Lys7 the chain carries N6-acetyllysine; alternate. Lys7 participates in a covalent cross-link: Glycyl lysine isopeptide (Lys-Gly) (interchain with G-Cter in SUMO2); alternate. N6-acetyllysine is present on residues Lys16 and Lys27. At Ser32 the chain carries Phosphoserine. N6-acetyllysine; alternate is present on Lys35. Lys35 carries the N6-succinyllysine; alternate modification. The Cysteine sulfenic acid (-SOH) intermediate role is filled by Cys52. Thr90 carries the post-translational modification Phosphothreonine. Residue Lys120 forms a Glycyl lysine isopeptide (Lys-Gly) (interchain with G-Cter in SUMO2) linkage. Lys136 carries the post-translational modification N6-acetyllysine. Residues 176-199 (GWKPGSDTIKPDVQKSKEYFSKQK) form a disordered region. Residues 184–199 (IKPDVQKSKEYFSKQK) show a composition bias toward basic and acidic residues. Lys185 participates in a covalent cross-link: Glycyl lysine isopeptide (Lys-Gly) (interchain with G-Cter in SUMO1). Lys197 bears the N6-acetyllysine mark.

This sequence belongs to the peroxiredoxin family. AhpC/Prx1 subfamily. Homodimer; disulfide-linked, upon oxidation. 5 homodimers assemble to form a ring-like decamer. Interacts with GDPD5; forms a mixed-disulfide with GDPD5. Interacts with SESN1 and SESN2. Interacts with FAM107A. In terms of processing, phosphorylated on Thr-90 during the M-phase, which leads to a decrease in enzymatic activity. Post-translationally, acetylation increases reducing activity and resistance to superoxidation. Deacetylated by HDAC6 which decreases reducing activity. As to expression, detected in heart and skeletal muscle (at protein level).

The protein localises to the cytoplasm. The enzyme catalyses a hydroperoxide + [thioredoxin]-dithiol = an alcohol + [thioredoxin]-disulfide + H2O. Its function is as follows. Thiol-specific peroxidase that catalyzes the reduction of hydrogen peroxide and organic hydroperoxides to water and alcohols, respectively. Plays a role in cell protection against oxidative stress by detoxifying peroxides and as sensor of hydrogen peroxide-mediated signaling events. Might participate in the signaling cascades of growth factors and tumor necrosis factor-alpha by regulating the intracellular concentrations of H(2)O(2). Reduces an intramolecular disulfide bond in GDPD5 that gates the ability to GDPD5 to drive postmitotic motor neuron differentiation. The polypeptide is Peroxiredoxin-1 (PRDX1) (Myotis lucifugus (Little brown bat)).